A 206-amino-acid polypeptide reads, in one-letter code: RNA-binding protein with multiple splicing 2 (206 aa).

The residue at position 2 (S2) is an N-acetylserine. An RRM domain is found at 25-102; it reads RTLFVSGLPV…QTLRLEFAKA (78 aa). The interval 35–45 is important for homodimerization; it reads DIKPRELYLLF.

As to quaternary structure, homodimer. Interacts with EEF2.

It localises to the cytoplasm. The protein localises to the nucleus. It is found in the stress granule. Functionally, RNA-binding protein involved in the regulation of smooth muscle cell differentiation and proliferation in the gastrointestinal system. Binds NOG mRNA, the major inhibitor of the bone morphogenetic protein (BMP) pathway. Mediates an increase of NOG mRNA levels, thereby contributing to the negative regulation of BMP signaling pathway and promoting reversible dedifferentiation and proliferation of smooth muscle cells. Acts as a pre-mRNA alternative splicing regulator. Mediates ACTN1 and FLNB alternative splicing. Likely binds to mRNA tandem CAC trinucleotide or CA dinucleotide motifs. This chain is RNA-binding protein with multiple splicing 2 (Rbpms2), found in Mus musculus (Mouse).